We begin with the raw amino-acid sequence, 575 residues long: Probable cytochrome P450 514A1 (575 aa).

The helical transmembrane segment at 4-24 threads the bilayer; it reads IFTIILTITILVLSLILKDLL. Position 448 (Cys448) interacts with heme.

It belongs to the cytochrome P450 family. Requires heme as cofactor.

The protein localises to the membrane. This Dictyostelium discoideum (Social amoeba) protein is Probable cytochrome P450 514A1 (cyp514A1).